The primary structure comprises 334 residues: Glycerol-3-phosphate dehydrogenase [NAD(P)+] (334 aa).

3 residues coordinate NADPH: W13, R33, and K106. Sn-glycerol 3-phosphate-binding residues include K106, G137, and S139. A141 is an NADPH binding site. Residues K192, D245, S255, R256, and N257 each coordinate sn-glycerol 3-phosphate. K192 (proton acceptor) is an active-site residue. R256 is a binding site for NADPH. Residues V280 and E282 each coordinate NADPH.

Belongs to the NAD-dependent glycerol-3-phosphate dehydrogenase family.

It is found in the cytoplasm. The catalysed reaction is sn-glycerol 3-phosphate + NAD(+) = dihydroxyacetone phosphate + NADH + H(+). It catalyses the reaction sn-glycerol 3-phosphate + NADP(+) = dihydroxyacetone phosphate + NADPH + H(+). It functions in the pathway membrane lipid metabolism; glycerophospholipid metabolism. In terms of biological role, catalyzes the reduction of the glycolytic intermediate dihydroxyacetone phosphate (DHAP) to sn-glycerol 3-phosphate (G3P), the key precursor for phospholipid synthesis. The sequence is that of Glycerol-3-phosphate dehydrogenase [NAD(P)+] from Chlamydia caviae (strain ATCC VR-813 / DSM 19441 / 03DC25 / GPIC) (Chlamydophila caviae).